The following is a 354-amino-acid chain: Serine/threonine-protein kinase-transforming protein mos (354 aa).

Residues 74-350 (VCLMHRLGSG…LLQRDLKAFR (277 aa)) enclose the Protein kinase domain. Residues 80–88 (LGSGGFGSV) and lysine 101 each bind ATP. The Proton acceptor role is filled by aspartate 209.

This sequence belongs to the protein kinase superfamily. Ser/Thr protein kinase family.

It carries out the reaction L-seryl-[protein] + ATP = O-phospho-L-seryl-[protein] + ADP + H(+). The enzyme catalyses L-threonyl-[protein] + ATP = O-phospho-L-threonyl-[protein] + ADP + H(+). The protein is Serine/threonine-protein kinase-transforming protein mos (V-MOS) of Moloney murine sarcoma virus (strain ts110) (MoMSV).